Reading from the N-terminus, the 447-residue chain is Succinate--CoA ligase [ADP-forming] subunit beta, mitochondrial (447 aa).

Residues 1 to 34 (MFKLGRNRALASAFAATSRAPLASRLPSVSQQQR) constitute a mitochondrion transit peptide. The ATP-grasp domain maps to 45-287 (ADLLRQYGIG…TTQEDPDEVR (243 aa)). Residues Lys-82, 89–91 (GRG), and Glu-150 each bind ATP. Mg(2+) is bound by residues Asn-242 and Asp-256. Substrate is bound by residues Asn-307 and 364–366 (GIV).

The protein belongs to the succinate/malate CoA ligase beta subunit family. Heterodimer of an alpha and a beta subunit. Mg(2+) is required as a cofactor.

It is found in the mitochondrion. It carries out the reaction succinate + ATP + CoA = succinyl-CoA + ADP + phosphate. It functions in the pathway carbohydrate metabolism; tricarboxylic acid cycle; succinate from succinyl-CoA (ligase route): step 1/1. In terms of biological role, succinyl-CoA synthetase functions in the citric acid cycle (TCA), coupling the hydrolysis of succinyl-CoA to the synthesis of ATP and thus represents the only step of substrate-level phosphorylation in the TCA. The beta subunit provides nucleotide specificity of the enzyme and binds the substrate succinate, while the binding sites for coenzyme A and phosphate are found in the alpha subunit. The chain is Succinate--CoA ligase [ADP-forming] subunit beta, mitochondrial from Neurospora crassa (strain ATCC 24698 / 74-OR23-1A / CBS 708.71 / DSM 1257 / FGSC 987).